The primary structure comprises 264 residues: Thymidylate synthase (264 aa).

DUMP is bound at residue R21. H51 contacts (6R)-5,10-methylene-5,6,7,8-tetrahydrofolate. Residue 126-127 (RR) coordinates dUMP. C146 (nucleophile) is an active-site residue. Residues 166–169 (RSCD), N177, and 207–209 (HLY) contribute to the dUMP site. Residue D169 coordinates (6R)-5,10-methylene-5,6,7,8-tetrahydrofolate. (6R)-5,10-methylene-5,6,7,8-tetrahydrofolate is bound at residue A263.

It belongs to the thymidylate synthase family. Bacterial-type ThyA subfamily. As to quaternary structure, homodimer.

Its subcellular location is the cytoplasm. The catalysed reaction is dUMP + (6R)-5,10-methylene-5,6,7,8-tetrahydrofolate = 7,8-dihydrofolate + dTMP. It participates in pyrimidine metabolism; dTTP biosynthesis. Catalyzes the reductive methylation of 2'-deoxyuridine-5'-monophosphate (dUMP) to 2'-deoxythymidine-5'-monophosphate (dTMP) while utilizing 5,10-methylenetetrahydrofolate (mTHF) as the methyl donor and reductant in the reaction, yielding dihydrofolate (DHF) as a by-product. This enzymatic reaction provides an intracellular de novo source of dTMP, an essential precursor for DNA biosynthesis. This chain is Thymidylate synthase, found in Shewanella baltica (strain OS155 / ATCC BAA-1091).